The primary structure comprises 341 residues: Hyaluronan and proteoglycan link protein 2 (341 aa).

A signal peptide spans 1–27; it reads MPSWIPLPAFCCLLLPWAFTVFHKTLG. The 109-residue stretch at 35–143 folds into the Ig-like V-type domain; it reads PHYLLPPIHE…GIEDESVALT (109 aa). Disulfide bonds link Cys-58–Cys-129, Cys-171–Cys-241, Cys-195–Cys-216, Cys-266–Cys-337, and Cys-291–Cys-312. 2 consecutive Link domains span residues 149–243 and 246–339; these read VVFP…FCFT and LAGQ…YCYA.

Belongs to the HAPLN family. As to expression, brain.

Its subcellular location is the secreted. The protein resides in the extracellular space. It localises to the extracellular matrix. Its function is as follows. Mediates a firm binding of versican V2 to hyaluronic acid. May play a pivotal role in the formation of the hyaluronan-associated matrix in the central nervous system (CNS) which facilitates neuronal conduction and general structural stabilization. Binds to hyaluronic acid. The chain is Hyaluronan and proteoglycan link protein 2 (Hapln2) from Rattus norvegicus (Rat).